A 218-amino-acid chain; its full sequence is Ras-related protein RabT2 (218 aa).

32–39 (GDYKTGKG) contacts GTP. The short motif at 54-61 (VSSIGVDF) is the Effector region element. GTP-binding positions include 80-84 (DANSC) and 140-143 (NKCD). Cys-215 bears the Cysteine methyl ester mark. The S-geranylgeranyl cysteine moiety is linked to residue Cys-215. A propeptide spans 216–218 (NIL) (removed in mature form).

Belongs to the small GTPase superfamily. Rab family.

The protein localises to the cell membrane. This Dictyostelium discoideum (Social amoeba) protein is Ras-related protein RabT2 (rabT2).